The chain runs to 73 residues: Large ribosomal subunit protein bL31 (73 aa).

This sequence belongs to the bacterial ribosomal protein bL31 family. Type A subfamily. As to quaternary structure, part of the 50S ribosomal subunit.

Binds the 23S rRNA. The polypeptide is Large ribosomal subunit protein bL31 (Rhizobium meliloti (strain 1021) (Ensifer meliloti)).